The following is a 198-amino-acid chain: Large ribosomal subunit protein bL27c (198 aa).

Residues 1–58 (MAMATSMSLNLIGAFKGLSLSSTSSFLRGDLSFSPKTSFTVTLPLENLQAPIPLTIES) constitute a chloroplast transit peptide.

This sequence belongs to the bacterial ribosomal protein bL27 family. As to quaternary structure, part of the 50S ribosomal subunit.

Its subcellular location is the plastid. It localises to the chloroplast. In Arabidopsis thaliana (Mouse-ear cress), this protein is Large ribosomal subunit protein bL27c (RPL27).